An 89-amino-acid polypeptide reads, in one-letter code: Small ribosomal subunit protein uS17 (89 aa).

The protein belongs to the universal ribosomal protein uS17 family. Part of the 30S ribosomal subunit.

Functionally, one of the primary rRNA binding proteins, it binds specifically to the 5'-end of 16S ribosomal RNA. The polypeptide is Small ribosomal subunit protein uS17 (Bdellovibrio bacteriovorus (strain ATCC 15356 / DSM 50701 / NCIMB 9529 / HD100)).